Reading from the N-terminus, the 110-residue chain is MARGNQRELARQKNMKKTQEISKGKRKEDSLTASQRKQSSGGQKSESKMSAGPHLPLKAPRENPCFPLPAAGGSRYYLAYGSITPISAFVFVVFFSVFFPSFYEDFCCWI.

Over residues 1 to 30 (MARGNQRELARQKNMKKTQEISKGKRKEDS) the composition is skewed to basic and acidic residues. The tract at residues 1 to 61 (MARGNQRELA…GPHLPLKAPR (61 aa)) is disordered. Residues 11-17 (RQKNMKK) are required for SNCA binding. Low complexity predominate over residues 34–50 (SQRKQSSGGQKSESKMS).

The protein belongs to the SERF family. In terms of assembly, interacts with SNCA; this interaction promotes the aggregation of SNCA. Isoform Long is predominantly expressed in heart, brain and skeletal muscle. Isoform Short and Isoform Long are expressed throughout the central nervous system, including spinal cord.

The protein resides in the cytoplasm. The protein localises to the cytosol. It localises to the nucleus. Positive regulator of amyloid protein aggregation and proteotoxicity. Induces conformational changes in amyloid proteins, such as APP, HTT, and SNCA, driving them into compact formations preceding the formation of aggregates. In Homo sapiens (Human), this protein is Small EDRK-rich factor 1 (SERF1A).